The sequence spans 578 residues: GRAM domain-containing protein 4 (578 aa).

Disordered stretches follow at residues 23 to 58 (ESPN…AGPG) and 136 to 159 (TEEQ…ERRS). A phosphoserine mark is found at serine 24 and serine 28. Positions 44 to 53 (SPRDSEELRD) are enriched in basic and acidic residues. The stretch at 83–143 (HLEIALLEKH…ARTEEQMAQQ (61 aa)) forms a coiled coil. 3 helical membrane-spanning segments follow: residues 240 to 260 (VYMN…LAIL), 334 to 354 (ITQK…FFPY), and 356 to 376 (LVGL…DFIF). Residues 415 to 435 (QTTSSRSYVPSAPAGLGKEED) are disordered. The GRAM domain occupies 445–523 (GNFHEIFNLT…VDITDIQKYK (79 aa)).

In terms of assembly, interacts with RTN4 (isoform B). In terms of tissue distribution, expressed in lung and in primary lung squamous cell carcinoma (LSCC).

It is found in the mitochondrion membrane. The protein localises to the endoplasmic reticulum membrane. Functionally, plays a role as a mediator of E2F1-induced apoptosis in the absence of p53/TP53. Plays a role as a mediator of E2F1-induced apoptosis in the absence of p53/TP53. Inhibits TLR9 response to nucelic acids and regulates TLR9-mediated innate immune response. The chain is GRAM domain-containing protein 4 from Homo sapiens (Human).